We begin with the raw amino-acid sequence, 345 residues long: Selenide, water dikinase (345 aa).

Residue Cys16 is part of the active site. ATP is bound by residues Lys19 and 46–48 (TSD). Asp49 serves as a coordination point for Mg(2+). ATP-binding positions include Asp66, Asp89, and 136–138 (GHT). Residue Asp89 participates in Mg(2+) binding. A Mg(2+)-binding site is contributed by Asp224.

The protein belongs to the selenophosphate synthase 1 family. Class I subfamily. As to quaternary structure, homodimer. Mg(2+) is required as a cofactor.

The catalysed reaction is hydrogenselenide + ATP + H2O = selenophosphate + AMP + phosphate + 2 H(+). Synthesizes selenophosphate from selenide and ATP. This chain is Selenide, water dikinase, found in Clostridium botulinum (strain Eklund 17B / Type B).